The following is a 238-amino-acid chain: MADLQTQMKQAVAAAAVEQIKDGMVLGLGSGSTAALMIQALGAKLASGELREIVGVTTSFQGEVMAAELGIPLRNLTAVDRIDLAIDGADEVDPSFQLIKGGGACHVQEKLVASRADRFVVVVDSTKIVDRLNLGFLLPVEVLPGAWRQVQGRLAELGGIADLRMAQCKAGPVVTDQGNLVLDVSMAGGIGDPEDLECRINNLPGVLENGLFVNLTDEVLVGQISDGVAGVRRLQRRE.

Substrate contacts are provided by residues serine 30–threonine 33, aspartate 87–aspartate 90, and lysine 100–glycine 103. The active-site Proton acceptor is glutamate 109. Residue lysine 127 coordinates substrate.

It belongs to the ribose 5-phosphate isomerase family. In terms of assembly, homodimer.

It carries out the reaction aldehydo-D-ribose 5-phosphate = D-ribulose 5-phosphate. It participates in carbohydrate degradation; pentose phosphate pathway; D-ribose 5-phosphate from D-ribulose 5-phosphate (non-oxidative stage): step 1/1. Catalyzes the reversible conversion of ribose-5-phosphate to ribulose 5-phosphate. This Prochlorococcus marinus (strain MIT 9303) protein is Ribose-5-phosphate isomerase A.